The primary structure comprises 85 residues: Large ribosomal subunit protein bL27 (85 aa).

The disordered stretch occupies residues 1-21 (MAHKKGQGSTQNNRDSAGRRL).

It belongs to the bacterial ribosomal protein bL27 family.

This Wolinella succinogenes (strain ATCC 29543 / DSM 1740 / CCUG 13145 / JCM 31913 / LMG 7466 / NCTC 11488 / FDC 602W) (Vibrio succinogenes) protein is Large ribosomal subunit protein bL27.